Here is a 264-residue protein sequence, read N- to C-terminus: uncharacterized protein (264 aa).

The first 16 residues, 1-16 (MKGKSALTLLLAGIFS), serve as a signal peptide directing secretion. Residue Cys-17 is the site of N-palmitoyl cysteine attachment. Residue Cys-17 is the site of S-diacylglycerol cysteine attachment.

The protein resides in the cell inner membrane. This is an uncharacterized protein from Escherichia coli (strain K12).